A 354-amino-acid chain; its full sequence is Serum paraoxonase/lactonase 3 (354 aa).

Cysteines 42 and 352 form a disulfide. A glycan (N-linked (GlcNAc...) asparagine) is linked at Asn50. Ca(2+) is bound by residues Glu53 and Asp54. His114 (proton acceptor) is an active-site residue. Residue Ile116 participates in Ca(2+) binding. Ser165 carries the post-translational modification Phosphoserine. Residues Asn167, Asn168, Asn223, Asp268, and Asn269 each coordinate Ca(2+). Residue Asn269 is glycosylated (N-linked (GlcNAc...) asparagine).

Belongs to the paraoxonase family. As to quaternary structure, homodimer. It depends on Ca(2+) as a cofactor. Glycosylated. Post-translationally, the signal sequence is not cleaved.

The protein resides in the secreted. The protein localises to the extracellular space. The catalysed reaction is a phenyl acetate + H2O = a phenol + acetate + H(+). It carries out the reaction An aryl dialkyl phosphate + H2O = dialkyl phosphate + an aryl alcohol.. It catalyses the reaction an N-acyl-L-homoserine lactone + H2O = an N-acyl-L-homoserine + H(+). Functionally, has low activity towards the organophosphate paraxon and aromatic carboxylic acid esters. Rapidly hydrolyzes lactones such as statin prodrugs (e.g. lovastatin). Hydrolyzes aromatic lactones and 5- or 6-member ring lactones with aliphatic substituents but not simple lactones or those with polar substituents. This is Serum paraoxonase/lactonase 3 (PON3) from Oryctolagus cuniculus (Rabbit).